Here is an 865-residue protein sequence, read N- to C-terminus: Cadherin-related family member 1 (865 aa).

A signal peptide spans 1–23 (MKHVRHFIPSLFLSLVHVCLVQA). Over 24–705 (NYAPYFFDNG…TKDNPMKALG (682 aa)) the chain is Extracellular. 6 consecutive Cadherin domains span residues 38–137 (NGNM…SPEF), 138–249 (INTP…PPMF), 250–356 (IGTP…PPTF), 362–475 (PQNR…VPKF), 476–579 (SSDY…SPEF), and 571–690 (DVND…GPMA). A helical membrane pass occupies residues 706–726 (VLAGVMGIMVLITIMISTAMF). Over 727–865 (WRNKRSNKIM…RNASMGEPHI (139 aa)) the chain is Cytoplasmic. Residues 782–810 (ENSNNNVQAAPVPPAAPLPPPPPALAASG) form a disordered region. A compositionally biased stretch (pro residues) spans 792-805 (PVPPAAPLPPPPPA).

It is found in the membrane. Potential calcium-dependent cell-adhesion protein. This is Cadherin-related family member 1 (CDHR1) from Gallus gallus (Chicken).